The sequence spans 350 residues: MAQDSTIKPFLEVLSGRRQAVPPIWMMRQAGRYLPEYRELRAKAGGFLDLCFTPEFAAEVTLQPIRRFAFDAAIIFSDILVIPYALGRSVRFEVGEGPRLDPLDTPDMAATLSREADMTKLEPVFEALRRVRRELDSKTALIGFCGAPWTVATYMVAGRGTPDQAPARMMAYRHPEAFAKIIDVLVENSVRYLLGQLKAGADVLQIFDTWAGVLPPREFARWSIEPTRRIVEGVRKIVPDAKIIGFPRGAGALLPSYIEATGVDAVSIDWAAEPSLVREKVQSRVAVQGNLDPLALIAGGAALDRAVDDVLANFAGGRLIFNLGHGIQPETPIPHVEQMIRRVRGSGLRE.

Residues 28 to 32 (RQAGR), Asp78, Tyr154, Thr209, and His325 contribute to the substrate site.

The protein belongs to the uroporphyrinogen decarboxylase family. As to quaternary structure, homodimer.

Its subcellular location is the cytoplasm. It catalyses the reaction uroporphyrinogen III + 4 H(+) = coproporphyrinogen III + 4 CO2. It participates in porphyrin-containing compound metabolism; protoporphyrin-IX biosynthesis; coproporphyrinogen-III from 5-aminolevulinate: step 4/4. In terms of biological role, catalyzes the decarboxylation of four acetate groups of uroporphyrinogen-III to yield coproporphyrinogen-III. The protein is Uroporphyrinogen decarboxylase of Nitrobacter hamburgensis (strain DSM 10229 / NCIMB 13809 / X14).